A 208-amino-acid chain; its full sequence is ATP-dependent Clp protease proteolytic subunit (208 aa).

The active-site Nucleophile is the Ser105. Residue His130 is part of the active site.

Belongs to the peptidase S14 family. Fourteen ClpP subunits assemble into 2 heptameric rings which stack back to back to give a disk-like structure with a central cavity, resembling the structure of eukaryotic proteasomes.

The protein localises to the cytoplasm. It carries out the reaction Hydrolysis of proteins to small peptides in the presence of ATP and magnesium. alpha-casein is the usual test substrate. In the absence of ATP, only oligopeptides shorter than five residues are hydrolyzed (such as succinyl-Leu-Tyr-|-NHMec, and Leu-Tyr-Leu-|-Tyr-Trp, in which cleavage of the -Tyr-|-Leu- and -Tyr-|-Trp bonds also occurs).. Cleaves peptides in various proteins in a process that requires ATP hydrolysis. Has a chymotrypsin-like activity. Plays a major role in the degradation of misfolded proteins. In Xylella fastidiosa (strain M23), this protein is ATP-dependent Clp protease proteolytic subunit.